A 41-amino-acid polypeptide reads, in one-letter code: U-megalopygitoxin(11)-Mo28 (41 aa).

A signal peptide spans 1–29 (MRTTLLLLIIAITVMVFVSEAYAAPAPEP).

The protein belongs to the caterpillar 11 family. Expressed by the venom apparatus.

It is found in the secreted. In terms of biological role, probable toxin. This chain is U-megalopygitoxin(11)-Mo28, found in Megalopyge opercularis (Southern flannel moth).